A 239-amino-acid chain; its full sequence is Ribonuclease PH (239 aa).

Phosphate contacts are provided by residues R86 and 124–126 (GTR).

The protein belongs to the RNase PH family. As to quaternary structure, homohexameric ring arranged as a trimer of dimers.

The catalysed reaction is tRNA(n+1) + phosphate = tRNA(n) + a ribonucleoside 5'-diphosphate. Its function is as follows. Phosphorolytic 3'-5' exoribonuclease that plays an important role in tRNA 3'-end maturation. Removes nucleotide residues following the 3'-CCA terminus of tRNAs; can also add nucleotides to the ends of RNA molecules by using nucleoside diphosphates as substrates, but this may not be physiologically important. Probably plays a role in initiation of 16S rRNA degradation (leading to ribosome degradation) during starvation. The polypeptide is Ribonuclease PH (Rickettsia felis (strain ATCC VR-1525 / URRWXCal2) (Rickettsia azadi)).